The sequence spans 193 residues: Orotate phosphoribosyltransferase (193 aa).

114–122 (EDVITTGGS) lines the 5-phospho-alpha-D-ribose 1-diphosphate pocket. Residues Thr118 and Arg146 each coordinate orotate.

Belongs to the purine/pyrimidine phosphoribosyltransferase family. PyrE subfamily. Homodimer. Requires Mg(2+) as cofactor.

It carries out the reaction orotidine 5'-phosphate + diphosphate = orotate + 5-phospho-alpha-D-ribose 1-diphosphate. It participates in pyrimidine metabolism; UMP biosynthesis via de novo pathway; UMP from orotate: step 1/2. In terms of biological role, catalyzes the transfer of a ribosyl phosphate group from 5-phosphoribose 1-diphosphate to orotate, leading to the formation of orotidine monophosphate (OMP). The chain is Orotate phosphoribosyltransferase from Chlorobaculum parvum (strain DSM 263 / NCIMB 8327) (Chlorobium vibrioforme subsp. thiosulfatophilum).